A 246-amino-acid polypeptide reads, in one-letter code: Ribonuclease PH (246 aa).

Phosphate-binding positions include Arg-91 and Gly-129 to Arg-131.

It belongs to the RNase PH family. As to quaternary structure, homohexameric ring arranged as a trimer of dimers.

It carries out the reaction tRNA(n+1) + phosphate = tRNA(n) + a ribonucleoside 5'-diphosphate. Functionally, phosphorolytic 3'-5' exoribonuclease that plays an important role in tRNA 3'-end maturation. Removes nucleotide residues following the 3'-CCA terminus of tRNAs; can also add nucleotides to the ends of RNA molecules by using nucleoside diphosphates as substrates, but this may not be physiologically important. Probably plays a role in initiation of 16S rRNA degradation (leading to ribosome degradation) during starvation. The polypeptide is Ribonuclease PH (Burkholderia vietnamiensis (strain G4 / LMG 22486) (Burkholderia cepacia (strain R1808))).